Consider the following 445-residue polypeptide: Phosphoglucosamine mutase (445 aa).

S101 (phosphoserine intermediate) is an active-site residue. Mg(2+) contacts are provided by S101, D240, D242, and D244. S101 carries the post-translational modification Phosphoserine.

It belongs to the phosphohexose mutase family. Mg(2+) serves as cofactor. Post-translationally, activated by phosphorylation.

It carries out the reaction alpha-D-glucosamine 1-phosphate = D-glucosamine 6-phosphate. Functionally, catalyzes the conversion of glucosamine-6-phosphate to glucosamine-1-phosphate. The chain is Phosphoglucosamine mutase from Azotobacter vinelandii (strain DJ / ATCC BAA-1303).